The following is a 467-amino-acid chain: Xanthan biosynthesis protein XanB (467 aa).

It belongs to the mannose-6-phosphate isomerase type 2 family.

The catalysed reaction is D-mannose 6-phosphate = D-fructose 6-phosphate. It catalyses the reaction alpha-D-mannose 1-phosphate + GTP + H(+) = GDP-alpha-D-mannose + diphosphate. It functions in the pathway nucleotide-sugar biosynthesis; GDP-alpha-D-mannose biosynthesis; GDP-alpha-D-mannose from alpha-D-mannose 1-phosphate (GTP route): step 1/1. Its pathway is nucleotide-sugar biosynthesis; GDP-alpha-D-mannose biosynthesis; alpha-D-mannose 1-phosphate from D-fructose 6-phosphate: step 1/2. In terms of biological role, involved in xanthan production. In Xanthomonas campestris pv. campestris (strain ATCC 33913 / DSM 3586 / NCPPB 528 / LMG 568 / P 25), this protein is Xanthan biosynthesis protein XanB (xanB).